The chain runs to 525 residues: Probable malate:quinone oxidoreductase (525 aa).

The protein belongs to the MQO family. It depends on FAD as a cofactor.

It carries out the reaction (S)-malate + a quinone = a quinol + oxaloacetate. It functions in the pathway carbohydrate metabolism; tricarboxylic acid cycle; oxaloacetate from (S)-malate (quinone route): step 1/1. This Serratia proteamaculans (strain 568) protein is Probable malate:quinone oxidoreductase.